A 300-amino-acid polypeptide reads, in one-letter code: MKRVITLFAVLLMGWSVNAWSFACKTANGTAIPIGGGSANVYVNLAPVVNVGQNLVVDLSTQIFCHNDYPETITDYVTLQRGSAYGGVLSNFSGTVKYSGSSYPFPTTSETPRVVYNSRTDKPWPVALYLTPVSSAGGVAIKAGSLIAVLILRQTNNYNSDDFQFVWNIYANNDVVVPTGGCDVSARDVTVTLPDYPGSVPIPLTVYCAKSQNLGYYLSGTTADAGNSIFTNTASFSPAQGVGVQLTRNGTIIPANNTVSLGAVGTSAVSLGLTANYARTGGQVTAGNVQSIIGVTFVYQ.

Positions 1 to 21 are cleaved as a signal peptide; that stretch reads MKRVITLFAVLLMGWSVNAWS.

It belongs to the fimbrial protein family.

It is found in the fimbrium. Functionally, involved in regulation of length and mediation of adhesion of type 1 fimbriae (but not necessary for the production of fimbriae). Adhesin responsible for the binding to D-mannose. It is laterally positioned at intervals in the structure of the type 1 fimbriae. In order to integrate FimH in the fimbriae FimF and FimG are needed. This is Type 1 fimbrin D-mannose specific adhesin (fimH) from Escherichia coli (strain K12).